A 210-amino-acid chain; its full sequence is Cytidylate kinase (210 aa).

9–17 (GPAAAGKGT) contributes to the ATP binding site.

Belongs to the cytidylate kinase family. Type 1 subfamily.

It localises to the cytoplasm. The enzyme catalyses CMP + ATP = CDP + ADP. It carries out the reaction dCMP + ATP = dCDP + ADP. This is Cytidylate kinase from Agrobacterium fabrum (strain C58 / ATCC 33970) (Agrobacterium tumefaciens (strain C58)).